The following is a 368-amino-acid chain: MSNAPILLTPGPLTTSIRTRQAMLVDWGSWDRDFNQLTASVCEQLLAIIDGSASHHCVPLQGSGTFAVEAAIGTLVPRDGKVLVLINGAYGQRLAKICKVLGRPYSTFETAEDQPTTAADVDRLLAADPAVTHVALIHCETSTGILNPLPEIAQVIKRHGKRLIIDAMSSFGALPIDAREIPFEALIAASGKCLEGVPGMGFVFAEKTALAAAEGNAHSLAMDLHDQHAYMAKTGQWRFTPPTHVVAALHEALQQYNEEGGLPARHQRYADNCKTLLDGMAAIGLRSFLPAEIQAPIIVTFHAPNDARYQFKDFYERVKAKGFILYPGKLTQVETFRVGCIGVVGADGMQAAVNAVAQVLREMEVLDI.

Lysine 192 bears the N6-(pyridoxal phosphate)lysine mark.

Belongs to the class-V pyridoxal-phosphate-dependent aminotransferase family. PhnW subfamily. As to quaternary structure, homodimer. Pyridoxal 5'-phosphate is required as a cofactor.

The catalysed reaction is (2-aminoethyl)phosphonate + pyruvate = phosphonoacetaldehyde + L-alanine. Functionally, involved in phosphonate degradation. The protein is 2-aminoethylphosphonate--pyruvate transaminase of Pseudomonas putida (strain GB-1).